A 378-amino-acid polypeptide reads, in one-letter code: Palmitoyltransferase PFA4 (378 aa).

The Cytoplasmic segment spans residues 1–9 (MPVKLRWPW). Residues 10-30 (LGIAIPTFLISFIGYGAHYFI) traverse the membrane as a helical segment. At 31–40 (LSNFLSVPKQ) the chain is on the lumenal side. Residues 41-61 (ITFEFCLSMIWLSYYLAICTN) form a helical membrane-spanning segment. Residues 62–119 (PGRPLPNYKPPPDIWRNFCKKCQSYKPERSHHCKTCNQCVLMMDHHCPWTMNCVGFAN) are Cytoplasmic-facing. One can recognise a DHHC domain in the interval 78 to 128 (NFCKKCQSYKPERSHHCKTCNQCVLMMDHHCPWTMNCVGFANYPHFLRFLF). Catalysis depends on C108, which acts as the S-palmitoyl cysteine intermediate. A helical membrane pass occupies residues 120–140 (YPHFLRFLFWIIVTTSVLFCI). Topologically, residues 141–164 (QAKRIYFIWQQRHLPGYFFKKSEL) are lumenal. Residues 165 to 185 (IFLTISSPLNSFVLLTITILF) form a helical membrane-spanning segment. Over 186-378 (LRCLFNQILN…DDFGVDVDME (193 aa)) the chain is Cytoplasmic.

The protein belongs to the DHHC palmitoyltransferase family. PFA4 subfamily. In terms of processing, autopalmitoylated.

Its subcellular location is the endoplasmic reticulum membrane. It carries out the reaction L-cysteinyl-[protein] + hexadecanoyl-CoA = S-hexadecanoyl-L-cysteinyl-[protein] + CoA. Functionally, mediates the reversible addition of palmitate to target proteins, thereby regulating their membrane association and biological function. Palmitoylates several amino acid permeases. Palmitoylates chitin synthase CHS3, which is required for its proper export from the ER. Can palmitoylate RAS2 in vitro. The sequence is that of Palmitoyltransferase PFA4 from Saccharomyces cerevisiae (strain ATCC 204508 / S288c) (Baker's yeast).